The chain runs to 608 residues: Chaperone protein HtpG (608 aa).

Positions methionine 1–arginine 332 are a; substrate-binding. A b region spans residues glutamate 333–glutamine 536. The interval leucine 537–serine 608 is c.

This sequence belongs to the heat shock protein 90 family. Homodimer.

It localises to the cytoplasm. In terms of biological role, molecular chaperone. Has ATPase activity. This chain is Chaperone protein HtpG, found in Campylobacter jejuni subsp. jejuni serotype O:2 (strain ATCC 700819 / NCTC 11168).